The following is a 1877-amino-acid chain: Protein TIC 214 (1877 aa).

6 helical membrane passes run 18 to 38 (IINS…FSIG), 67 to 87 (FIAG…HLAL), 90 to 110 (PHTI…WNNH), 127 to 147 (LSIQ…HFIL), 175 to 195 (VGWL…LVWI), and 224 to 244 (IFSI…PSPI). Positions 249-258 (FKETSETEER) are enriched in basic and acidic residues. The segment at 249–308 (FKETSETEERGEGEEETDVEIETTFETKGTRQEQEGSTEEDPSLFSEEKEDPDKIDEREE) is disordered. Composition is skewed to acidic residues over residues 259-271 (GEGE…EIET) and 284-298 (GSTE…EEKE). A compositionally biased stretch (basic and acidic residues) spans 299 to 308 (DPDKIDEREE).

This sequence belongs to the TIC214 family. Part of the Tic complex.

The protein resides in the plastid. The protein localises to the chloroplast inner membrane. Its function is as follows. Involved in protein precursor import into chloroplasts. May be part of an intermediate translocation complex acting as a protein-conducting channel at the inner envelope. In Eucalyptus globulus subsp. globulus (Tasmanian blue gum), this protein is Protein TIC 214.